The chain runs to 1235 residues: Insulin receptor substrate 1 (1235 aa).

S3 bears the Phosphoserine mark. A mediates interaction with PHIP region spans residues 3-133; sequence SPPDTDGFSD…AGGGCGGSCS (131 aa). The PH domain occupies 12–115; sequence DVRKVGYLRK…WYQALLQLHN (104 aa). A Phosphoserine; by CK2 modification is found at S99. The 105-residue stretch at 155–259 folds into the IRS-type PTB domain; that stretch reads FKEVWQVILK…EAMRAMSDEF (105 aa). Residues 258 to 425 form a disordered region; sequence EFRPRTKSQS…SDGGFISSDE (168 aa). A phosphoserine; by RPS6KB1 mark is found at S265 and S302. A compositionally biased stretch (low complexity) spans 265–276; it reads SQSSSSCSNPIS. S307 is modified (phosphoserine; by IKKB, MAPK8 and RPS6KB1). 4 positions are modified to phosphoserine: S318, S325, S340, and S343. Basic residues predominate over residues 349-358; that stretch reads THAHRHRGSS. Composition is skewed to low complexity over residues 378–399 and 407–419; these read SPSA…GSTS and SSAS…SDGG. Position 414 is a phosphoserine (S414). T441 and T448 each carry phosphothreonine. Y460 is subject to Phosphotyrosine; by INSR. A YXXM motif 1 motif is present at residues 460–463; sequence YICM. T502 carries the phosphothreonine; by CK2 modification. A disordered region spans residues 520 to 539; that stretch reads THSAGTSPTISHQKTPSQSS. S522 bears the Phosphoserine; by RPS6KB1 mark. Residues 522–539 are compositionally biased toward polar residues; the sequence is SAGTSPTISHQKTPSQSS. Short sequence motifs (YXXM motif) lie at residues 546–549 and 608–611; these read YTEM and YMPM. Y608 carries the post-translational modification Phosphotyrosine; by INSR. S612 carries the post-translational modification Phosphoserine. Y628 is subject to Phosphotyrosine; by INSR. A YXXM motif 4 motif is present at residues 628 to 631; that stretch reads YMPM. S632 is modified (phosphoserine; by RPS6KB1 and ROCK2). Y658 carries the post-translational modification Phosphotyrosine. The short motif at 658-661 is the YXXM motif 5 element; that stretch reads YMMM. A compositionally biased stretch (low complexity) spans 669–689; that stretch reads PDIGGGSCSSSSISAAPSGSS. Positions 669 to 720 are disordered; the sequence is PDIGGGSCSSSSISAAPSGSSYGKPWTNGVGGHHTHALPHAKPPVESGGGKL. A YXXM motif 6 motif is present at residues 727-730; it reads YMNM. Residues 766–921 are disordered; that stretch reads FKHTQRPGEP…ATSRSSPSVR (156 aa). The segment covering 771 to 780 has biased composition (basic and acidic residues); the sequence is RPGEPEEGAR. 3 stretches are compositionally biased toward low complexity: residues 785–794, 801–810, and 872–881; these read RLSSSSGRLR, DSSSSTSSDS, and QQQQQQQQQQ. S789 is subject to Phosphoserine; by AMPK and SIK2. Position 891 is a phosphoserine (S891). Y895, Y939, and Y987 each carry phosphotyrosine; by INSR. The GRB2-binding stretch occupies residues 895 to 897; that stretch reads YVN. Short sequence motifs (YXXM motif) lie at residues 939-942, 987-990, and 1010-1013; these read YMNM, YMTM, and YADM. The tract at residues 1024-1165 is disordered; the sequence is LPRTTGAAPP…SAPGCGAAGG (142 aa). Residues 1025-1046 are compositionally biased toward low complexity; it reads PRTTGAAPPPSSTASASASVTP. Over residues 1072–1084 the composition is skewed to polar residues; that stretch reads TRVNLSPNHNQSA. At S1099 the chain carries Phosphoserine. S1100 is subject to Phosphoserine; by RPS6KB1. A compositionally biased stretch (polar residues) spans 1101–1114; it reads ETFSAPTRAANTVS. Residues 1118–1128 show a composition bias toward gly residues; that stretch reads GAAGGGSGGGS. Y1172 carries the phosphotyrosine; by INSR modification. Positions 1177–1235 are disordered; sequence LVKDVKQHPQDCPSQQQSLPPPPPHQPLGSNEGSSPRRSSEDLSTYASINFQKQPEDRQ. A Glycyl lysine isopeptide (Lys-Gly) (interchain with G-Cter in ubiquitin) cross-link involves residue K1179. Over residues 1204–1229 the composition is skewed to polar residues; it reads LGSNEGSSPRRSSEDLSTYASINFQK. Y1222 is subject to Phosphotyrosine; by INSR.

As to quaternary structure, interacts with SOCS7. Interacts (via IRS-type PTB domain) with IGF1R and INSR (via the tyrosine-phosphorylated NPXY motif). Interacts with UBTF, FER and PIK3CA. Interacts (via phosphorylated YXXM motifs) with PIK3R1. Interacts with ROCK1. Interacts (via PH domain) with PHIP. Interacts with GRB2. Interacts with ALK. Interacts with EIF2AK2/PKR. Interacts with GKAP1. Interacts with DGKZ in the absence of insulin; insulin stimulation decreases this interaction. Found in a ternary complex with DGKZ and PIP5K1A in the absence of insulin stimulation. Interacts with SQSTM1; the interaction is disrupted by the presence of tensin TNS2. Interacts with NCK1 (via SH2 domain). Interacts with NCK2 (via SH3 domain). Interacts with SH2B1; this interaction enhances leptin-induced activation of the PI3-kinase pathway. Interacts with DVL2; this interaction promotes the Wnt/beta-catenin signaling pathway. Interacts with JAK1. Serine phosphorylation of IRS1 is a mechanism for insulin resistance. Ser-307 phosphorylation inhibits insulin action through disruption of IRS1 interaction with the insulin receptor, and Ser-789 phosphorylation is increased in the liver of insulin-resistant rats. Phosphorylation of Tyr-895 is required for GRB2-binding. Phosphorylated by ALK. Phosphorylated at Ser-265, Ser-302, Ser-632 and Ser-1100 by RPS6KB1; phosphorylation induces accelerated degradation of IRS1. Phosphorylated on tyrosine residues in response to insulin. In skeletal muscles, dephosphorylated on Tyr-608 by TNS2 under anabolic conditions; dephosphorylation results in the proteasomal degradation of IRS1. In terms of processing, ubiquitinated by the Cul7-RING(FBXW8) complex in a mTOR-dependent manner, leading to its degradation: the Cul7-RING(FBXW8) complex recognizes and binds IRS1 previously phosphorylated by S6 kinase (RPS6KB1 or RPS6KB2). Ubiquitinated by TRAF4 through 'Lys-29' linkage; this ubiquitination regulates the interaction of IRS1 with IGFR and IRS1 tyrosine phosphorylation upon IGF1 stimulation. Post-translationally, S-nitrosylation at by BLVRB inhibits its activity.

It localises to the cytoplasm. Its subcellular location is the nucleus. Functionally, signaling adapter protein that participates in the signal transduction from two prominent receptor tyrosine kinases, insulin receptor/INSR and insulin-like growth factor I receptor/IGF1R. Plays therefore an important role in development, growth, glucose homeostasis as well as lipid metabolism. Upon phosphorylation by the insulin receptor, functions as a signaling scaffold that propagates insulin action through binding to SH2 domain-containing proteins including the p85 regulatory subunit of PI3K, NCK1, NCK2, GRB2 or SHP2. Recruitment of GRB2 leads to the activation of the guanine nucleotide exchange factor SOS1 which in turn triggers the Ras/Raf/MEK/MAPK signaling cascade. Activation of the PI3K/AKT pathway is responsible for most of insulin metabolic effects in the cell, and the Ras/Raf/MEK/MAPK is involved in the regulation of gene expression and in cooperation with the PI3K pathway regulates cell growth and differentiation. Acts a positive regulator of the Wnt/beta-catenin signaling pathway through suppression of DVL2 autophagy-mediated degradation leading to cell proliferation. This is Insulin receptor substrate 1 (Irs1) from Rattus norvegicus (Rat).